Consider the following 292-residue polypeptide: Glutathione S-transferase L2, chloroplastic (292 aa).

A chloroplast-targeting transit peptide spans 1-56 (MSVGLKVSAFLHPTLALSSRDVSLSSSSSSLYLDRKILRPGSGRRWCKSRRTEPIL). The 82-residue stretch at 79-160 (GSTRLYISYT…YIDTNFEGPS (82 aa)) folds into the GST N-terminal domain. Residues 89–90 (CP), 117–118 (NR), 131–132 (KV), and 144–145 (ES) each bind glutathione. The 157-residue stretch at 130-286 (NKVPALEHNN…ELVERYKRRV (157 aa)) folds into the GST C-terminal domain.

The protein belongs to the GST superfamily. Lambda family.

It is found in the plastid. The protein localises to the chloroplast. The catalysed reaction is RX + glutathione = an S-substituted glutathione + a halide anion + H(+). Catalyzes the glutathione-dependent reduction of S-glutathionylquercetin to quercetin. In vitro, possesses glutathione-dependent thiol transferase activity toward 2-hydroxyethyl disulfide (HED). The polypeptide is Glutathione S-transferase L2, chloroplastic (GSTL2) (Arabidopsis thaliana (Mouse-ear cress)).